The chain runs to 428 residues: MMKSIALALCLTHHSPMVLSIVDYGDSQEKTIDSLWKKPHGSDLTWSGFSRVGVTEAYFAVPVDHFLTNPPSLRLSQTIYCRRGSSYVETEKVEEEDRDDFLKQVWFLTDNLVFFFVDIEEYIVIEQLGDTVYLWDASSCYTSKLVTIDDENGPVTSINWTQDGLDLAVGLDNSEVQVWDCVSNRHVRTLRGGHESRVGSLAWNNHILTTGGMDGKIVNNDVRIRSSIIGTYVGHTEEVCGLKWSESGKKLASGGNDNVVHIWDRSLASSNPTRQWLHRFEEHTAAVRALAWCPFQASLLATGGGVGDGKINFWNTHTGACLNSVETGSQVCSLLWSKSERELLSAHGFTQNQLTLWKYPSMVKMAELNGHTSRVLFMAQSPDGCTVASAAGDETLRLWNVFGEPPKTTKKAASKKYTEPFAHVNHIR.

7 WD repeats span residues W106 to L145, D150 to T189, G193 to G230, G234 to T273, E282 to S324, E326 to E367, and G370 to T409.

It belongs to the WD repeat CDC20/Fizzy family. In terms of assembly, the APC/C is composed of at least 11 subunits that stay tightly associated throughout the cell cycle.

It localises to the nucleus. The protein operates within protein modification; protein ubiquitination. Its function is as follows. Component of the anaphase promoting complex/cyclosome (APC/C), a cell cycle-regulated E3 ubiquitin-protein ligase complex that controls progression through mitosis and the G1 phase of the cell cycle. This chain is Cell division cycle 20.6, cofactor of APC complex (CDC20-6), found in Arabidopsis thaliana (Mouse-ear cress).